Here is a 141-residue protein sequence, read N- to C-terminus: MLMPKRTKYRKMMKGRNRGYANRGTEFTFGEFALKATEAGRINSRQIEAARIALTRFVKRQGKTWIRVFPDKPLTKKPLETRMGKGKGAVEEWVMNIKPGRIIYEMAGVSEEMAREALTLAMHKLPFKTKFVTRESQNEIY.

It belongs to the universal ribosomal protein uL16 family. In terms of assembly, part of the 50S ribosomal subunit.

Binds 23S rRNA and is also seen to make contacts with the A and possibly P site tRNAs. This is Large ribosomal subunit protein uL16 from Campylobacter jejuni subsp. jejuni serotype O:6 (strain 81116 / NCTC 11828).